Consider the following 217-residue polypeptide: Lectin ADEL (217 aa).

Intrachain disulfides connect cysteine 5–cysteine 187, cysteine 42–cysteine 68, cysteine 61–cysteine 77, cysteine 114–cysteine 135, and cysteine 142–cysteine 206. Asparagine 30 is a glycosylation site (N-linked (GlcNAc...) asparagine). N-linked (GlcNAc...) asparagine glycans are attached at residues asparagine 102 and asparagine 126.

Homodimer; disulfide-linked. Contains disulfide bonds.

Binds in decreasing order of affinity: galacturonic acid, D-galactosamine, methyl-alpha-D-galactopyranoside and further galactose-containing carbohydrates. Has hemagglutinating activity against human and rabbit erythrocytes. The polypeptide is Lectin ADEL (Aplysia dactylomela (Spotted sea hare)).